A 235-amino-acid chain; its full sequence is NADH-quinone oxidoreductase subunit C (235 aa).

The protein belongs to the complex I 30 kDa subunit family. In terms of assembly, NDH-1 is composed of 14 different subunits. Subunits NuoB, C, D, E, F, and G constitute the peripheral sector of the complex.

The protein localises to the cell membrane. The enzyme catalyses a quinone + NADH + 5 H(+)(in) = a quinol + NAD(+) + 4 H(+)(out). Its function is as follows. NDH-1 shuttles electrons from NADH, via FMN and iron-sulfur (Fe-S) centers, to quinones in the respiratory chain. The immediate electron acceptor for the enzyme in this species is believed to be a menaquinone. Couples the redox reaction to proton translocation (for every two electrons transferred, four hydrogen ions are translocated across the cytoplasmic membrane), and thus conserves the redox energy in a proton gradient. This Mycobacterium avium (strain 104) protein is NADH-quinone oxidoreductase subunit C.